Reading from the N-terminus, the 191-residue chain is Peptidyl-tRNA hydrolase (191 aa).

Y16 lines the tRNA pocket. The active-site Proton acceptor is the H21. Y67, N69, and N115 together coordinate tRNA.

Belongs to the PTH family. Monomer.

Its subcellular location is the cytoplasm. It carries out the reaction an N-acyl-L-alpha-aminoacyl-tRNA + H2O = an N-acyl-L-amino acid + a tRNA + H(+). Hydrolyzes ribosome-free peptidyl-tRNAs (with 1 or more amino acids incorporated), which drop off the ribosome during protein synthesis, or as a result of ribosome stalling. Functionally, catalyzes the release of premature peptidyl moieties from peptidyl-tRNA molecules trapped in stalled 50S ribosomal subunits, and thus maintains levels of free tRNAs and 50S ribosomes. This Wigglesworthia glossinidia brevipalpis protein is Peptidyl-tRNA hydrolase.